A 384-amino-acid chain; its full sequence is Urea transporter 1 (384 aa).

A disordered region spans residues 1-23 (MDDNPTAVKLDQGGNQAPQGQGR). A run of 5 helical transmembrane segments spans residues 61–81 (ISQVVFVSNPISGILILVGLL), 85–105 (PWCALNGCVGTVVSTLTALLL), 111–131 (AITAGLQGYNATLVGILMAIY), 138–158 (FWWLLFPVSAMSMTCPIFSSA), and 169–189 (PVFTLPFNMALSMYLSATGHF). Asn-206 carries N-linked (GlcNAc...) asparagine glycosylation. Transmembrane regions (helical) follow at residues 237 to 257 (GGIFLGAILLSSPLMCLHAAI), 279 to 299 (GLWGFNSSLACIAIGGMFMAL), and 327 to 347 (VVGLPSCTWPFCLATLLFLLL).

It belongs to the urea transporter family. In terms of assembly, homotrimer; each subunit contains a pore through which urea permeates. Identified in a complex with STOM.

The protein localises to the cell membrane. It localises to the basolateral cell membrane. It catalyses the reaction urea(in) = urea(out). Functionally, mediates the transport of urea driven by a concentration gradient across the cell membranes of erythrocytes and the renal inner medullary collecting duct which is critical to the urinary concentrating mechanism. Facilitates water transport in erythrocytes. This Ovis aries (Sheep) protein is Urea transporter 1 (SLC14A1).